The sequence spans 439 residues: Proline--tRNA ligase (439 aa).

This sequence belongs to the class-II aminoacyl-tRNA synthetase family. ProS type 2 subfamily. In terms of assembly, homodimer.

Its subcellular location is the cytoplasm. It carries out the reaction tRNA(Pro) + L-proline + ATP = L-prolyl-tRNA(Pro) + AMP + diphosphate. Functionally, catalyzes the attachment of proline to tRNA(Pro) in a two-step reaction: proline is first activated by ATP to form Pro-AMP and then transferred to the acceptor end of tRNA(Pro). The polypeptide is Proline--tRNA ligase (Rhodopseudomonas palustris (strain BisA53)).